Consider the following 297-residue polypeptide: Ribosomal RNA small subunit methyltransferase H (297 aa).

S-adenosyl-L-methionine contacts are provided by residues 30-32 (GGY), aspartate 48, phenylalanine 75, aspartate 96, and glutamine 103.

The protein belongs to the methyltransferase superfamily. RsmH family.

It localises to the cytoplasm. It carries out the reaction cytidine(1402) in 16S rRNA + S-adenosyl-L-methionine = N(4)-methylcytidine(1402) in 16S rRNA + S-adenosyl-L-homocysteine + H(+). Specifically methylates the N4 position of cytidine in position 1402 (C1402) of 16S rRNA. This Ehrlichia chaffeensis (strain ATCC CRL-10679 / Arkansas) protein is Ribosomal RNA small subunit methyltransferase H.